We begin with the raw amino-acid sequence, 441 residues long: UDP-N-acetylglucosamine--peptide N-acetylglucosaminyltransferase stabilizing protein GtfB (441 aa).

This sequence belongs to the GtfB family. In terms of assembly, forms a heterotetramer with 2 subunits each of GtfA and GtfB. Part of the accessory SecA2/SecY2 protein translocation apparatus.

The protein resides in the cell membrane. Its pathway is protein modification; protein glycosylation. Its function is as follows. Required for polymorphic O-glycosylation of the serine-rich repeat protein (SRRP) in this bacteria. A stabilizing protein that is part of the accessory SecA2/SecY2 system specifically required to export serine-rich repeat cell wall proteins encoded in the same operon. The GtfA-GtfB complex adds GlcNAc from UDP-GlcNAc to the substrate protein, attaching the first sugar residue. Stabilizes the glycosylation activity of GtfA. Has no N-acetylglucosaminyl transferase activity on its own. The chain is UDP-N-acetylglucosamine--peptide N-acetylglucosaminyltransferase stabilizing protein GtfB from Limosilactobacillus reuteri subsp. suis (strain ATCC 53608 / LMG 31752 / 1063) (Lactobacillus reuteri).